The following is a 528-amino-acid chain: NAC domain-containing protein 13 (528 aa).

The region spanning 10 to 160 is the NAC domain; the sequence is LAPGFRFHPT…AYVLYKIYKK (151 aa). The DNA-binding element occupies 107–166; sequence VGEKKTLVFHRGRAPNGERTNWVMHEYTLHKEELKRCGGEDVKDAYVLYKIYKKSGSGPK. The segment at 388–419 is disordered; it reads EAPGTGDSSEFLNPVPSGISTTNEDDPSKDES. The chain crosses the membrane as a helical span at residues 499 to 519; it reads FFCLSIIGALCALFWVIIGTM.

As to quaternary structure, interacts with RCD1. In terms of tissue distribution, expressed in roots, rosette leaves, shoot apex, stems and flowers.

It is found in the endoplasmic reticulum membrane. The protein localises to the nucleus. Transcriptional activator activated by proteolytic cleavage through regulated intramembrane proteolysis (RIP). Involved in oxidative stress tolerance by mediating regulation of mitochondrial retrograde signaling during mitochondrial dysfunction. Interacts directly with the mitochondrial dysfunction DNA consensus motif 5'-CTTGNNNNNCA[AC]G-3', a cis-regulatory elements of several mitochondrial retrograde regulation-induced genes, and triggers increased oxidative stress tolerance. The chain is NAC domain-containing protein 13 from Arabidopsis thaliana (Mouse-ear cress).